The chain runs to 284 residues: Pseudouridine-5'-phosphate glycosidase (284 aa).

The active-site Proton donor is the E17. Residues K77 and V97 each coordinate substrate. A Mn(2+)-binding site is contributed by D126. S128–D130 provides a ligand contact to substrate. Catalysis depends on K147, which acts as the Nucleophile.

It belongs to the pseudouridine-5'-phosphate glycosidase family. Homotrimer. Requires Mn(2+) as cofactor.

The enzyme catalyses D-ribose 5-phosphate + uracil = psi-UMP + H2O. Catalyzes the reversible cleavage of pseudouridine 5'-phosphate (PsiMP) to ribose 5-phosphate and uracil. Functions biologically in the cleavage direction, as part of a pseudouridine degradation pathway. This chain is Pseudouridine-5'-phosphate glycosidase, found in Thermotoga petrophila (strain ATCC BAA-488 / DSM 13995 / JCM 10881 / RKU-1).